The chain runs to 430 residues: Enolase (430 aa).

Gln163 lines the (2R)-2-phosphoglycerate pocket. Residue Glu205 is the Proton donor of the active site. The Mg(2+) site is built by Asp242, Glu285, and Asp312. 4 residues coordinate (2R)-2-phosphoglycerate: Lys337, Arg366, Ser367, and Lys388. The Proton acceptor role is filled by Lys337.

This sequence belongs to the enolase family. Requires Mg(2+) as cofactor.

Its subcellular location is the cytoplasm. The protein localises to the secreted. The protein resides in the cell surface. The enzyme catalyses (2R)-2-phosphoglycerate = phosphoenolpyruvate + H2O. Its pathway is carbohydrate degradation; glycolysis; pyruvate from D-glyceraldehyde 3-phosphate: step 4/5. In terms of biological role, catalyzes the reversible conversion of 2-phosphoglycerate (2-PG) into phosphoenolpyruvate (PEP). It is essential for the degradation of carbohydrates via glycolysis. This chain is Enolase, found in Rubrobacter xylanophilus (strain DSM 9941 / JCM 11954 / NBRC 16129 / PRD-1).